A 460-amino-acid chain; its full sequence is Argininosuccinate lyase (460 aa).

The protein belongs to the lyase 1 family. Argininosuccinate lyase subfamily.

It is found in the cytoplasm. The catalysed reaction is 2-(N(omega)-L-arginino)succinate = fumarate + L-arginine. It participates in amino-acid biosynthesis; L-arginine biosynthesis; L-arginine from L-ornithine and carbamoyl phosphate: step 3/3. This chain is Argininosuccinate lyase, found in Actinobacillus succinogenes (strain ATCC 55618 / DSM 22257 / CCUG 43843 / 130Z).